We begin with the raw amino-acid sequence, 270 residues long: Orotidine 5'-phosphate decarboxylase (270 aa).

Lys-89 serves as the catalytic Proton donor.

Belongs to the OMP decarboxylase family. Type 2 subfamily.

It catalyses the reaction orotidine 5'-phosphate + H(+) = UMP + CO2. It participates in pyrimidine metabolism; UMP biosynthesis via de novo pathway; UMP from orotate: step 2/2. The protein is Orotidine 5'-phosphate decarboxylase of Dehalococcoides mccartyi (strain ATCC BAA-2266 / KCTC 15142 / 195) (Dehalococcoides ethenogenes (strain 195)).